Reading from the N-terminus, the 130-residue chain is YopE regulator (130 aa).

Its function is as follows. Positive regulator of YopE. This chain is YopE regulator (yerA), found in Yersinia enterocolitica serotype O:8 / biotype 1B (strain NCTC 13174 / 8081).